Here is a 250-residue protein sequence, read N- to C-terminus: DNA polymerase sliding clamp (250 aa).

The protein belongs to the PCNA family. In terms of assembly, homotrimer. The subunits circularize to form a toroid; DNA passes through its center. Replication factor C (RFC) is required to load the toroid on the DNA.

Functionally, sliding clamp subunit that acts as a moving platform for DNA processing. Responsible for tethering the catalytic subunit of DNA polymerase and other proteins to DNA during high-speed replication. In Methanococcus maripaludis (strain C5 / ATCC BAA-1333), this protein is DNA polymerase sliding clamp.